The following is a 279-amino-acid chain: Replication factor A protein 2 (279 aa).

The segment at 26–47 (GAGFNEYDQSSQPSVDRQQGAG) is disordered. The segment covering 32–46 (YDQSSQPSVDRQQGA) has biased composition (polar residues). The OB DNA-binding region spans 80 to 140 (VTFVGVLRNI…GNIKIFSGKI (61 aa)).

This sequence belongs to the replication factor A protein 2 family. Heterotrimer of 68, 30, and 12 kDa chains. In terms of processing, phosphorylated in a cell cycle-dependent manner. Hypophosphorylated in G1, becomes phosphorylated at the G1/S boundary, it is maintained in this state through the M phase.

It is found in the nucleus. In terms of biological role, binds to single-stranded sequences. This chain is Replication factor A protein 2 (ssb2), found in Schizosaccharomyces pombe (strain 972 / ATCC 24843) (Fission yeast).